Consider the following 344-residue polypeptide: Succinylglutamate desuccinylase (344 aa).

3 residues coordinate Zn(2+): H63, E66, and H160. E224 is an active-site residue.

Belongs to the AspA/AstE family. Succinylglutamate desuccinylase subfamily. Zn(2+) is required as a cofactor.

It carries out the reaction N-succinyl-L-glutamate + H2O = L-glutamate + succinate. It functions in the pathway amino-acid degradation; L-arginine degradation via AST pathway; L-glutamate and succinate from L-arginine: step 5/5. Its function is as follows. Transforms N(2)-succinylglutamate into succinate and glutamate. This Shewanella sp. (strain MR-7) protein is Succinylglutamate desuccinylase.